Reading from the N-terminus, the 310-residue chain is L-lactate dehydrogenase (310 aa).

Residues Val-17, Asp-38, Lys-43, Tyr-69, and 83–84 each bind NAD(+); that span reads GA. Substrate is bound by residues Gln-86 and Arg-92. NAD(+) is bound by residues Ser-105, 122–124, and Ser-147; that span reads ATN. 124-127 is a binding site for substrate; that stretch reads NPVD. Residue 152–155 participates in substrate binding; that stretch reads DTAR. Arg-157 and His-172 together coordinate beta-D-fructose 1,6-bisphosphate. His-179 serves as the catalytic Proton acceptor. Tyr-218 carries the phosphotyrosine modification. Position 227 (Thr-227) interacts with substrate.

This sequence belongs to the LDH/MDH superfamily. LDH family. As to quaternary structure, homotetramer.

It localises to the cytoplasm. It carries out the reaction (S)-lactate + NAD(+) = pyruvate + NADH + H(+). It functions in the pathway fermentation; pyruvate fermentation to lactate; (S)-lactate from pyruvate: step 1/1. Allosterically activated by fructose 1,6-bisphosphate (FBP). Functionally, catalyzes the conversion of lactate to pyruvate. The chain is L-lactate dehydrogenase from Halalkalibacterium halodurans (strain ATCC BAA-125 / DSM 18197 / FERM 7344 / JCM 9153 / C-125) (Bacillus halodurans).